A 306-amino-acid chain; its full sequence is Ornithine carbamoyltransferase (306 aa).

Residues 54–57 (STRT), Gln81, Arg105, and 132–135 (HPLQ) each bind carbamoyl phosphate. Residues Asn162, Asp226, and 230–231 (SM) contribute to the L-ornithine site. Carbamoyl phosphate is bound by residues 266-267 (CL) and Arg294.

The protein belongs to the aspartate/ornithine carbamoyltransferase superfamily. OTCase family.

The protein localises to the cytoplasm. The enzyme catalyses carbamoyl phosphate + L-ornithine = L-citrulline + phosphate + H(+). It functions in the pathway amino-acid biosynthesis; L-arginine biosynthesis; L-arginine from L-ornithine and carbamoyl phosphate: step 1/3. Its function is as follows. Reversibly catalyzes the transfer of the carbamoyl group from carbamoyl phosphate (CP) to the N(epsilon) atom of ornithine (ORN) to produce L-citrulline. This is Ornithine carbamoyltransferase from Sulfurisphaera tokodaii (strain DSM 16993 / JCM 10545 / NBRC 100140 / 7) (Sulfolobus tokodaii).